The following is a 336-amino-acid chain: uncharacterized protein (336 aa).

A signal peptide spans 1–33 (MGSAWPAEIRKIAKISKRLLGATVILGFGVAEA).

This is an uncharacterized protein from Sinorhizobium fredii (strain NBRC 101917 / NGR234).